Consider the following 1147-residue polypeptide: Lon protease homolog 2, peroxisomal (1147 aa).

The region spanning 20-348 (LPTYKLDSNL…EVNRMLESMI (329 aa)) is the Lon N-terminal domain. Disordered stretches follow at residues 395–444 (KPDK…DDDD) and 561–626 (KIES…SLTT). A compositionally biased stretch (acidic residues) spans 427 to 444 (DGNESNDEYDDDEDDDDD). Composition is skewed to basic and acidic residues over residues 561–574 (KIESENSKKSKKNE) and 582–597 (KNDKQRSEKTFTRSDD). An ATP-binding site is contributed by 651–658 (GPPGTGKT). Residues 903–1131 (SAKCGVVNGL…WDVIKAVWGD (229 aa)) enclose the Lon proteolytic domain. Residues Ser1006 and Lys1049 contribute to the active site.

It belongs to the peptidase S16 family.

Its subcellular location is the peroxisome matrix. The enzyme catalyses Hydrolysis of proteins in presence of ATP.. Functionally, ATP-dependent serine protease that mediates the selective degradation of misfolded and unassembled polypeptides in the peroxisomal matrix. Necessary for type 2 peroxisome targeting signal (PTS2)-containing protein processing and facilitates peroxisome matrix protein import. This is Lon protease homolog 2, peroxisomal from Debaryomyces hansenii (strain ATCC 36239 / CBS 767 / BCRC 21394 / JCM 1990 / NBRC 0083 / IGC 2968) (Yeast).